Consider the following 223-residue polypeptide: DNA mismatch repair protein MutH (223 aa).

It belongs to the MutH family.

The protein localises to the cytoplasm. Sequence-specific endonuclease that cleaves unmethylated GATC sequences. It is involved in DNA mismatch repair. The protein is DNA mismatch repair protein MutH of Shewanella baltica (strain OS185).